The sequence spans 118 residues: Large ribosomal subunit protein bL17 (118 aa).

It belongs to the bacterial ribosomal protein bL17 family. In terms of assembly, part of the 50S ribosomal subunit. Contacts protein L32.

The polypeptide is Large ribosomal subunit protein bL17 (Campylobacter fetus subsp. fetus (strain 82-40)).